We begin with the raw amino-acid sequence, 30 residues long: Cyclotide cter-P (30 aa).

A cross-link (cyclopeptide (Gly-Asn)) is located at residues 1–30 (GIPCGESCVFIPCITAAIGCSCKSKVCYRN). Intrachain disulfides connect Cys4/Cys20, Cys8/Cys22, and Cys13/Cys27.

In terms of processing, this is a cyclic peptide.

Its subcellular location is the secreted. Probably participates in a plant defense mechanism. This Clitoria ternatea (Butterfly pea) protein is Cyclotide cter-P.